Here is a 313-residue protein sequence, read N- to C-terminus: Pantoate--beta-alanine ligase (313 aa).

An ATP-binding site is contributed by 36–43 (MGYLHQGH). The active-site Proton donor is the histidine 43. Glutamine 71 is a (R)-pantoate binding site. Position 71 (glutamine 71) interacts with beta-alanine. 178 to 181 (GKKD) contacts ATP. Residue glutamine 184 coordinates (R)-pantoate. An ATP-binding site is contributed by 215–218 (MSSR).

This sequence belongs to the pantothenate synthetase family. In terms of assembly, homodimer.

It localises to the cytoplasm. Its subcellular location is the cytosol. The enzyme catalyses (R)-pantoate + beta-alanine + ATP = (R)-pantothenate + AMP + diphosphate + H(+). It functions in the pathway cofactor biosynthesis; (R)-pantothenate biosynthesis; (R)-pantothenate from (R)-pantoate and beta-alanine: step 1/1. Catalyzes the condensation of pantoate with beta-alanine to form pantothenate. Essential for panthotenate biosynthesis. The polypeptide is Pantoate--beta-alanine ligase (PANC) (Oryza sativa subsp. japonica (Rice)).